The chain runs to 437 residues: GTPase Der (437 aa).

2 consecutive EngA-type G domains span residues 4–167 and 175–352; these read PVVA…AEKD and IRFS…DHQH. Residues 10 to 17, 57 to 61, 119 to 122, 181 to 188, 229 to 233, and 294 to 297 each bind GTP; these read GRPNVGKS, DTGGI, NKVD, DTAGI, and NKWD. The KH-like domain maps to 353–437; that stretch reads RRIQSAVLND…PIRLIKRRRK (85 aa).

Belongs to the TRAFAC class TrmE-Era-EngA-EngB-Septin-like GTPase superfamily. EngA (Der) GTPase family. As to quaternary structure, associates with the 50S ribosomal subunit.

Functionally, GTPase that plays an essential role in the late steps of ribosome biogenesis. This chain is GTPase Der, found in Limosilactobacillus fermentum (strain NBRC 3956 / LMG 18251) (Lactobacillus fermentum).